A 459-amino-acid chain; its full sequence is Transmembrane protein 143 (459 aa).

Helical transmembrane passes span 280 to 300 (LLNL…GMVV) and 301 to 321 (LTDL…FMGL). The residue at position 332 (S332) is a Phosphoserine. Residues 435–459 (GFPKLDPVAPITSEPPQATPSSNIS) are disordered. The segment covering 448–459 (EPPQATPSSNIS) has biased composition (polar residues).

Its subcellular location is the membrane. The polypeptide is Transmembrane protein 143 (TMEM143) (Homo sapiens (Human)).